Here is a 183-residue protein sequence, read N- to C-terminus: UPF0316 protein EF_1609 (183 aa).

The next 3 helical transmembrane spans lie at Met-1–Leu-21, Val-35–Val-55, and Pro-62–Ile-82.

Belongs to the UPF0316 family.

The protein resides in the cell membrane. In Enterococcus faecalis (strain ATCC 700802 / V583), this protein is UPF0316 protein EF_1609.